The following is a 148-amino-acid chain: Hemoglobin subunit beta (148 aa).

The region spanning 3–148 (DWTDAERSAI…VVSALGRQYH (146 aa)) is the Globin domain. Heme b is bound by residues His-64 and His-93.

It belongs to the globin family. In terms of assembly, heterotetramer of two alpha chains and two beta chains. Red blood cells.

Functionally, involved in oxygen transport from gills to the various peripheral tissues. The protein is Hemoglobin subunit beta (hbb) of Oncorhynchus nerka (Sockeye salmon).